The following is an 835-amino-acid chain: Lon protease (835 aa).

One can recognise a Lon N-terminal domain in the interval 36-234; the sequence is VHVFPLLRRP…KALILLKKEL (199 aa). 387–394 provides a ligand contact to ATP; sequence GPPGVGKT. A Lon proteolytic domain is found at 646 to 828; that stretch reads RTPVGVCMGL…DQVFKISFPN (183 aa). Catalysis depends on residues Ser-734 and Lys-777.

It belongs to the peptidase S16 family. Homohexamer. Organized in a ring with a central cavity.

It is found in the cytoplasm. The catalysed reaction is Hydrolysis of proteins in presence of ATP.. Its function is as follows. ATP-dependent serine protease that mediates the selective degradation of mutant and abnormal proteins as well as certain short-lived regulatory proteins. Required for cellular homeostasis and for survival from DNA damage and developmental changes induced by stress. Degrades polypeptides processively to yield small peptide fragments that are 5 to 10 amino acids long. Binds to DNA in a double-stranded, site-specific manner. In Protochlamydia amoebophila (strain UWE25), this protein is Lon protease.